Reading from the N-terminus, the 354-residue chain is Uroporphyrinogen decarboxylase (354 aa).

Substrate-binding positions include 27 to 31, aspartate 77, tyrosine 154, threonine 209, and histidine 327; that span reads RQAGR.

This sequence belongs to the uroporphyrinogen decarboxylase family. As to quaternary structure, homodimer.

The protein localises to the cytoplasm. The enzyme catalyses uroporphyrinogen III + 4 H(+) = coproporphyrinogen III + 4 CO2. It functions in the pathway porphyrin-containing compound metabolism; protoporphyrin-IX biosynthesis; coproporphyrinogen-III from 5-aminolevulinate: step 4/4. Its function is as follows. Catalyzes the decarboxylation of four acetate groups of uroporphyrinogen-III to yield coproporphyrinogen-III. This chain is Uroporphyrinogen decarboxylase, found in Pseudomonas putida (strain W619).